We begin with the raw amino-acid sequence, 1072 residues long: DNA-directed RNA polymerase subunit beta (1072 aa).

It belongs to the RNA polymerase beta chain family. In terms of assembly, in plastids the minimal PEP RNA polymerase catalytic core is composed of four subunits: alpha, beta, beta', and beta''. When a (nuclear-encoded) sigma factor is associated with the core the holoenzyme is formed, which can initiate transcription.

The protein resides in the plastid. Its subcellular location is the chloroplast. The enzyme catalyses RNA(n) + a ribonucleoside 5'-triphosphate = RNA(n+1) + diphosphate. DNA-dependent RNA polymerase catalyzes the transcription of DNA into RNA using the four ribonucleoside triphosphates as substrates. The chain is DNA-directed RNA polymerase subunit beta from Cycas taitungensis (Prince sago).